We begin with the raw amino-acid sequence, 462 residues long: ESX-1 secretion system protein EccE1 (462 aa).

2 helical membrane-spanning segments follow: residues 9–29 and 34–54; these read FSTG…IAFL and WWAG…TFYG.

It belongs to the EccE family. As to quaternary structure, part of the ESX-1 / type VII secretion system (T7SS), which is composed of cytosolic and membrane components. The ESX-1 membrane complex is composed of EccB1, EccCa1, EccCb1, EccD1 and EccE1.

The protein localises to the cell inner membrane. Part of the ESX-1 specialized secretion system, which delivers several virulence factors to host cells during infection, including the key virulence factors EsxA (ESAT-6) and EsxB (CFP-10). The protein is ESX-1 secretion system protein EccE1 of Mycobacterium tuberculosis (strain CDC 1551 / Oshkosh).